A 213-amino-acid chain; its full sequence is Receptor-binding cancer antigen expressed on SiSo cells (213 aa).

The Extracellular segment spans residues 1–7 (MAITQFR). A helical; Signal-anchor for type III membrane protein membrane pass occupies residues 8–27 (LFKVCTCLATVFSFLKRLIC). Residues 28–213 (RSGRGRKLSG…EQNKIGVKLS (186 aa)) are Cytoplasmic-facing. Ser-36 is subject to Phosphoserine. The residue at position 41 (Thr-41) is a Phosphothreonine. At Tyr-94 the chain carries Phosphotyrosine. Positions 163-211 (EDAAWQAEEVLRQQKIADREKRAAEQQRKKMEKEAQRLMKKEQNKIGVK) form a coiled coil. Over residues 179–206 (ADREKRAAEQQRKKMEKEAQRLMKKEQN) the composition is skewed to basic and acidic residues. The interval 179-213 (ADREKRAAEQQRKKMEKEAQRLMKKEQNKIGVKLS) is disordered.

Homodimer. In terms of tissue distribution, widely expressed. Expressed in heart, brain, spleen, liver, kidney and testis.

It localises to the golgi apparatus membrane. Functionally, may participate in suppression of cell proliferation and induces apoptotic cell death through activation of interleukin-1-beta converting enzyme (ICE)-like proteases. In Mus musculus (Mouse), this protein is Receptor-binding cancer antigen expressed on SiSo cells (Ebag9).